Here is a 606-residue protein sequence, read N- to C-terminus: MQQDNRKKNNLEMEFFSDYGDANRFKVQEVIGKGSYGVVCSAIDTLTGEKVAIKKIHDIFEHISDAARILREIKLLRLLRHPDIVEIKHIMLPPSRREFKDIYVVFELMESDLHQVIKANDDLTREHYQFFLYQLLRALKYIHTANVYHRDLKPKNILANANCKLKICDFGLARVAFNDTPTTIFWTDYVATRWYRAPELCGSFYSKYTPAIDIWSIGCIFAEVLMGKPLFPGKNVVHQLDLMTDLLGTPSLDTISRVRNEKARRYLTSMRKKPPIPFAQKFPNADPLSLKLLERLLAFDPKDRPTAEEALADPYFKGLAKVEREPSCQPITKMEFEFERRKVTKEDIRELISREILEYHPQLLKDHMNGADKASFLYPSAVDQFRRQFAHLEENSGKTGPVAPLERKHASLPRSTVIHSTAVARGGQPKLMNNTNTLNPETTQNIPFNHATIQAQQRNLSAAKPSTFMGPVAPFDNGRISRDAYDPRSFIRSTNLPFSQQSAATVAMGKQQERRTTMEPEKQARQISQYNRYAPDVAINIDNNPFIMARTGMNKAENISDRIIIDTNLLQATAGIGVAAAAAAAAPGGSAHRKVGAVRYGMSKMY.

A Protein kinase domain is found at phenylalanine 25–phenylalanine 316. ATP contacts are provided by residues isoleucine 31–valine 39 and lysine 54. The active-site Proton acceptor is aspartate 151. Position 187 is a phosphothreonine (threonine 187). Residues threonine 187–tyrosine 189 carry the TXY motif. Tyrosine 189 bears the Phosphotyrosine mark. Phosphothreonine is present on threonine 192.

It belongs to the protein kinase superfamily. CMGC Ser/Thr protein kinase family. MAP kinase subfamily. In terms of processing, dually phosphorylated on Thr-187 and Tyr-189, which activates the enzyme.

The enzyme catalyses L-seryl-[protein] + ATP = O-phospho-L-seryl-[protein] + ADP + H(+). It carries out the reaction L-threonyl-[protein] + ATP = O-phospho-L-threonyl-[protein] + ADP + H(+). Its activity is regulated as follows. Activated by threonine and tyrosine phosphorylation. The polypeptide is Mitogen-activated protein kinase 20 (MPK20) (Arabidopsis thaliana (Mouse-ear cress)).